The following is a 213-amino-acid chain: Small ribosomal subunit protein uS3 (213 aa).

In terms of domain architecture, KH type-2 spans 38-106; sequence IRKYVKKTLY…EFSIEVNEIR (69 aa).

It belongs to the universal ribosomal protein uS3 family. As to quaternary structure, part of the 30S ribosomal subunit. Forms a tight complex with proteins S10 and S14.

Functionally, binds the lower part of the 30S subunit head. Binds mRNA in the 70S ribosome, positioning it for translation. This chain is Small ribosomal subunit protein uS3, found in Oleidesulfovibrio alaskensis (strain ATCC BAA-1058 / DSM 17464 / G20) (Desulfovibrio alaskensis).